Consider the following 363-residue polypeptide: Chorismate synthase (363 aa).

Arg47 and Arg53 together coordinate NADP(+). Residues 124 to 126, Gly286, 301 to 305, and Arg327 contribute to the FMN site; these read RSS and KPTAT.

Belongs to the chorismate synthase family. As to quaternary structure, homotetramer. FMNH2 serves as cofactor.

The enzyme catalyses 5-O-(1-carboxyvinyl)-3-phosphoshikimate = chorismate + phosphate. Its pathway is metabolic intermediate biosynthesis; chorismate biosynthesis; chorismate from D-erythrose 4-phosphate and phosphoenolpyruvate: step 7/7. Catalyzes the anti-1,4-elimination of the C-3 phosphate and the C-6 proR hydrogen from 5-enolpyruvylshikimate-3-phosphate (EPSP) to yield chorismate, which is the branch point compound that serves as the starting substrate for the three terminal pathways of aromatic amino acid biosynthesis. This reaction introduces a second double bond into the aromatic ring system. The polypeptide is Chorismate synthase (Thermosynechococcus vestitus (strain NIES-2133 / IAM M-273 / BP-1)).